Reading from the N-terminus, the 198-residue chain is Recombination protein RecR (198 aa).

Residues 58 to 73 form a C4-type zinc finger; the sequence is CSVCGNYTDTDPCAIC. In terms of domain architecture, Toprim spans 81 to 175; the sequence is SLVCVVEEPK…KVTRIAHGIP (95 aa).

Belongs to the RecR family.

In terms of biological role, may play a role in DNA repair. It seems to be involved in an RecBC-independent recombinational process of DNA repair. It may act with RecF and RecO. The protein is Recombination protein RecR of Clostridium acetobutylicum (strain ATCC 824 / DSM 792 / JCM 1419 / IAM 19013 / LMG 5710 / NBRC 13948 / NRRL B-527 / VKM B-1787 / 2291 / W).